We begin with the raw amino-acid sequence, 44 residues long: Alpha-amylase inhibitor WDAI-3 (44 aa).

Cysteines 20 and 41 form a disulfide.

It belongs to the protease inhibitor I6 (cereal trypsin/alpha-amylase inhibitor) family. As to quaternary structure, homodimer. Post-translationally, the disulfide bonds are essential for the inhibitor activity. In terms of tissue distribution, endosperm.

Its subcellular location is the secreted. Functionally, alpha-amylase inhibitor. This chain is Alpha-amylase inhibitor WDAI-3 (IHA-B1-2), found in Triticum aestivum (Wheat).